A 169-amino-acid polypeptide reads, in one-letter code: Small ribosomal subunit protein uS5 (169 aa).

Residues 14 to 77 form the S5 DRBM domain; it reads MKEQVVDIRR…QAAKKNLLLV (64 aa).

It belongs to the universal ribosomal protein uS5 family. As to quaternary structure, part of the 30S ribosomal subunit. Contacts proteins S4 and S8.

With S4 and S12 plays an important role in translational accuracy. Functionally, located at the back of the 30S subunit body where it stabilizes the conformation of the head with respect to the body. In Alkaliphilus metalliredigens (strain QYMF), this protein is Small ribosomal subunit protein uS5.